Here is a 102-residue protein sequence, read N- to C-terminus: Scorpine-like-2 (102 aa).

A signal peptide spans 1-19 (MQTQCTVLQLLVLVALCSC). The 40-residue stretch at 63–102 (QQLCLIVDTVQWCNKSCLAAENKEGYCHGTKCKCGIKVSY) folds into the BetaSPN-type CS-alpha/beta domain. Intrachain disulfides connect C66–C89, C75–C94, and C79–C96.

It belongs to the long chain scorpion toxin family. Class 3 subfamily. As to expression, expressed by the venom gland.

The protein localises to the secreted. Its function is as follows. Inhibits voltage-gated potassium channels. This is Scorpine-like-2 from Urodacus yaschenkoi (Inland robust scorpion).